We begin with the raw amino-acid sequence, 146 residues long: UPF0260 protein Swoo_2117 (146 aa).

The protein belongs to the UPF0260 family.

The sequence is that of UPF0260 protein Swoo_2117 from Shewanella woodyi (strain ATCC 51908 / MS32).